A 328-amino-acid polypeptide reads, in one-letter code: Carbonic anhydrase-related protein 11 (328 aa).

The N-terminal stretch at 1–23 is a signal peptide; that stretch reads MGAAARLSAPRALVLWAALGAAA. Positions 33–303 constitute an Alpha-carbonic anhydrase domain; it reads DWWSYKDNLQ…LAHRALRGNR (271 aa). 3 N-linked (GlcNAc...) asparagine glycosylation sites follow: asparagine 118, asparagine 170, and asparagine 260. Residues 299 to 328 form a disordered region; it reads LRGNRDPRHPERRCRGPNYRLHVDGAPHGR. Residues 319–328 show a composition bias toward basic and acidic residues; the sequence is LHVDGAPHGR.

This sequence belongs to the alpha-carbonic anhydrase family.

The protein localises to the secreted. Does not have a catalytic activity. The chain is Carbonic anhydrase-related protein 11 (CA11) from Pongo abelii (Sumatran orangutan).